The following is a 629-amino-acid chain: tRNA uridine 5-carboxymethylaminomethyl modification enzyme MnmG (629 aa).

FAD-binding positions include 15–20 (GAGHAG), Val127, and Ser182. The tract at residues 203-226 (TPPRVKSSTIDYSKTEEQPGDDHP) is disordered. Over residues 215–226 (SKTEEQPGDDHP) the composition is skewed to basic and acidic residues. An NAD(+)-binding site is contributed by 274–288 (GARYCPSIEDKIVRF). FAD is bound at residue Gln371.

The protein belongs to the MnmG family. In terms of assembly, homodimer. Heterotetramer of two MnmE and two MnmG subunits. FAD serves as cofactor.

Its subcellular location is the cytoplasm. In terms of biological role, NAD-binding protein involved in the addition of a carboxymethylaminomethyl (cmnm) group at the wobble position (U34) of certain tRNAs, forming tRNA-cmnm(5)s(2)U34. In Listeria monocytogenes serovar 1/2a (strain ATCC BAA-679 / EGD-e), this protein is tRNA uridine 5-carboxymethylaminomethyl modification enzyme MnmG.